Consider the following 265-residue polypeptide: tRNA pseudouridine synthase A (265 aa).

The active-site Nucleophile is Asp58. Tyr116 contacts substrate.

This sequence belongs to the tRNA pseudouridine synthase TruA family. Homodimer.

It catalyses the reaction uridine(38/39/40) in tRNA = pseudouridine(38/39/40) in tRNA. Functionally, formation of pseudouridine at positions 38, 39 and 40 in the anticodon stem and loop of transfer RNAs. This Neisseria meningitidis serogroup C / serotype 2a (strain ATCC 700532 / DSM 15464 / FAM18) protein is tRNA pseudouridine synthase A.